The chain runs to 436 residues: Anhydro-N-acetylmuramic acid kinase (436 aa).

Glycine 32–aspartate 39 contributes to the ATP binding site.

The protein belongs to the anhydro-N-acetylmuramic acid kinase family.

It carries out the reaction 1,6-anhydro-N-acetyl-beta-muramate + ATP + H2O = N-acetyl-D-muramate 6-phosphate + ADP + H(+). It participates in amino-sugar metabolism; 1,6-anhydro-N-acetylmuramate degradation. Its pathway is cell wall biogenesis; peptidoglycan recycling. In terms of biological role, catalyzes the specific phosphorylation of 1,6-anhydro-N-acetylmuramic acid (anhMurNAc) with the simultaneous cleavage of the 1,6-anhydro ring, generating MurNAc-6-P. Is required for the utilization of anhMurNAc either imported from the medium or derived from its own cell wall murein, and thus plays a role in cell wall recycling. The polypeptide is Anhydro-N-acetylmuramic acid kinase (Psychrobacter arcticus (strain DSM 17307 / VKM B-2377 / 273-4)).